Reading from the N-terminus, the 917-residue chain is Translation initiation factor IF-2 (917 aa).

The span at 102–249 (EKSQAEEQAL…KWTAEPKAPE (148 aa)) shows a compositional bias: basic and acidic residues. Residues 102–326 (EKSQAEEQAL…KSSTLQQGFH (225 aa)) are disordered. The segment covering 279–293 (RRGRTAKAPRAKKNN) has biased composition (basic residues). Residues 294–306 (RHSEKADREEARA) are compositionally biased toward basic and acidic residues. The 170-residue stretch at 416–585 (SRAPVVTIMG…LLQAEVLELK (170 aa)) folds into the tr-type G domain. The tract at residues 425–432 (GHVDHGKT) is G1. 425 to 432 (GHVDHGKT) is a GTP binding site. Residues 450–454 (GITQH) form a G2 region. The interval 471–474 (DTPG) is G3. Residues 471–475 (DTPGH) and 525–528 (NKID) each bind GTP. Residues 525–528 (NKID) are G4. The G5 stretch occupies residues 561-563 (SAK).

The protein belongs to the TRAFAC class translation factor GTPase superfamily. Classic translation factor GTPase family. IF-2 subfamily.

It is found in the cytoplasm. In terms of biological role, one of the essential components for the initiation of protein synthesis. Protects formylmethionyl-tRNA from spontaneous hydrolysis and promotes its binding to the 30S ribosomal subunits. Also involved in the hydrolysis of GTP during the formation of the 70S ribosomal complex. The polypeptide is Translation initiation factor IF-2 (infB) (Proteus vulgaris).